The chain runs to 217 residues: Protein GrpE (217 aa).

Belongs to the GrpE family. As to quaternary structure, homodimer.

The protein localises to the cytoplasm. Participates actively in the response to hyperosmotic and heat shock by preventing the aggregation of stress-denatured proteins, in association with DnaK and GrpE. It is the nucleotide exchange factor for DnaK and may function as a thermosensor. Unfolded proteins bind initially to DnaJ; upon interaction with the DnaJ-bound protein, DnaK hydrolyzes its bound ATP, resulting in the formation of a stable complex. GrpE releases ADP from DnaK; ATP binding to DnaK triggers the release of the substrate protein, thus completing the reaction cycle. Several rounds of ATP-dependent interactions between DnaJ, DnaK and GrpE are required for fully efficient folding. The protein is Protein GrpE of Mycoplasma pneumoniae (strain ATCC 29342 / M129 / Subtype 1) (Mycoplasmoides pneumoniae).